Consider the following 2212-residue polypeptide: RNA-directed RNA polymerase L (2212 aa).

The interval 30–288 (KDALLSQVHP…SHEENDSLDC (259 aa)) is endonuclease. Glutamate 55, aspartate 93, and glutamate 106 together coordinate Mn(2+). The active site involves lysine 119. The disordered stretch occupies residues 922-942 (MKSSDAREERLQDPKRNEKNA). The span at 923–942 (KSSDAREERLQDPKRNEKNA) shows a compositional bias: basic and acidic residues. A RdRp catalytic domain is found at 1175-1371 (CDMKMAVNNG…YLSSKLNKFV (197 aa)). A Mg(2+)-binding site is contributed by aspartate 1333.

The protein belongs to the Bunyavirales RNA polymerase family. Homomultimer; the oligomeric structure is essential for the polymerase activity. Interacts with nucleoprotein N. Interacts with protein Z; this interaction inhibits viral transcription and replication, Z partially blocks the product exit tunnel for the releasing nascent RNA product. Requires Mn(2+) as cofactor. It depends on Mg(2+) as a cofactor.

The protein resides in the virion. It is found in the host cytoplasm. The enzyme catalyses RNA(n) + a ribonucleoside 5'-triphosphate = RNA(n+1) + diphosphate. Its function is as follows. RNA-dependent RNA polymerase, which is responsible for the replication and transcription of the viral RNA genome using antigenomic RNA as an intermediate. During transcription, synthesizes subgenomic RNAs and assures their capping by a cap-snatching mechanism, which involves the endonuclease activity cleaving the host capped pre-mRNAs. These short capped RNAs are then used as primers for viral transcription. The 3'-end of subgenomic mRNAs molecules are heterogeneous and not polyadenylated. The replicase function is to direct synthesis of antigenomic and genomic RNA which are encapsidated and non capped. As a consequence of the use of the same enzyme for both transcription and replication, these mechanisms need to be well coordinated. These processes may be regulated by proteins N and Z in a dose-dependent manner. Z protein inhibits the viral polymerase L und thus the viral transcription and RNA synthesis. The chain is RNA-directed RNA polymerase L from Sabia mammarenavirus (isolate Human/Brasil/SPH114202/1990) (SABV).